A 307-amino-acid chain; its full sequence is Transposase InsD for insertion element IS2-9 (307 aa).

Positions 112–295 (KPAVPPSKRA…SPREYLRQRA (184 aa)) constitute an Integrase catalytic domain.

Its function is as follows. Involved in the transposition of the insertion sequence IS2. In Escherichia coli (strain K12), this protein is Transposase InsD for insertion element IS2-9.